A 755-amino-acid chain; its full sequence is Oligopeptide transporter 1 (755 aa).

13 helical membrane-spanning segments follow: residues 58 to 78 (TWTLGLFSCILLAFVNQFFGF), 82 to 102 (QLWVSSVAAQIVTLPLGKLMA), 134 to 154 (ITIFANTGAGGVYATSIITIV), 165 to 185 (AAAMLLTQTTQLLGYGWAGIF), 226 to 246 (FFIIVFCVSFAYYIIPGYLFP), 298 to 318 (FFAIANFFGGFFIFLYIVLPI), 370 to 390 (YLSVMFALLYGLSFGSLCATI), 434 to 454 (WWFIAVLVISFAFALYACEGF), 462 to 482 (WWGLILACAIALFFTLPIGVI), 546 to 566 (FIVQLVATVVASTVCFGTTWW), 614 to 634 (GIYPGMNWFFLIGLLAPVPFW), 664 to 684 (AKAVHYWSWAIVGVVFNYYIF), and 697 to 717 (ILSAALDAGTAIMGVLIFFAF).

The protein belongs to the oligopeptide OPT transporter (TC 2.A.67.1) family. As to expression, highly expressed in flowers, and moderately expressed in leaves and stems.

Its subcellular location is the membrane. In terms of biological role, involved in the translocation of tetra- and pentapeptides across the cellular membrane in an energy-dependent manner. The protein is Oligopeptide transporter 1 (OPT1) of Arabidopsis thaliana (Mouse-ear cress).